The following is a 320-amino-acid chain: o-succinylbenzoate synthase (320 aa).

Lys-133 (proton donor) is an active-site residue. Mg(2+) contacts are provided by Asp-161, Glu-190, and Asp-213. The active-site Proton acceptor is the Lys-235.

The protein belongs to the mandelate racemase/muconate lactonizing enzyme family. MenC type 1 subfamily. It depends on a divalent metal cation as a cofactor.

It catalyses the reaction (1R,6R)-6-hydroxy-2-succinyl-cyclohexa-2,4-diene-1-carboxylate = 2-succinylbenzoate + H2O. The protein operates within quinol/quinone metabolism; 1,4-dihydroxy-2-naphthoate biosynthesis; 1,4-dihydroxy-2-naphthoate from chorismate: step 4/7. It participates in quinol/quinone metabolism; menaquinone biosynthesis. In terms of biological role, converts 2-succinyl-6-hydroxy-2,4-cyclohexadiene-1-carboxylate (SHCHC) to 2-succinylbenzoate (OSB). This chain is o-succinylbenzoate synthase, found in Escherichia coli O6:K15:H31 (strain 536 / UPEC).